Consider the following 279-residue polypeptide: MVLEAVLLGIVQGITEFLPISSTAHMYILAKLLNLHVPGRFFLSSVQLGTSFALILYFFKDVKGIISETSRSIYSFIQFGIRQKQEKRNEYTRLGLLLVTGTIPVVLLGFLLVRFVPDGFFSAARNLFTMGVALIVFGLLLGFADALFRRKKGNIFQITFIESVLIGAAQIFAIIPGVSRSGITITTARFLNFDRQLAVRFSFLLSLPVTFIGGMYGLVAGPDTDYYSLGYSLIGAIVSFVVGLLVVSALLRIISKTTFVLFVYYRVLFGLFLVIVSFF.

Helical transmembrane passes span 1 to 21, 39 to 59, 96 to 116, 128 to 148, 155 to 175, 201 to 221, 231 to 251, and 259 to 279; these read MVLEAVLLGIVQGITEFLPIS, GRFFLSSVQLGTSFALILYFF, LLLVTGTIPVVLLGFLLVRFV, FTMGVALIVFGLLLGFADALF, IFQITFIESVLIGAAQIFAII, FSFLLSLPVTFIGGMYGLVAG, YSLIGAIVSFVVGLLVVSALL, and FVLFVYYRVLFGLFLVIVSFF.

It belongs to the UppP family.

It is found in the cell membrane. The enzyme catalyses di-trans,octa-cis-undecaprenyl diphosphate + H2O = di-trans,octa-cis-undecaprenyl phosphate + phosphate + H(+). Its function is as follows. Catalyzes the dephosphorylation of undecaprenyl diphosphate (UPP). Confers resistance to bacitracin. In Tropheryma whipplei (strain TW08/27) (Whipple's bacillus), this protein is Undecaprenyl-diphosphatase.